Here is a 154-residue protein sequence, read N- to C-terminus: Fibroblast growth factor 2 (154 aa).

A propeptide spanning residues 1–9 is cleaved from the precursor; sequence MAASGITSL. Asparagine 35 contributes to the heparin binding site. A Phosphotyrosine; by TEC modification is found at tyrosine 81. Residue lysine 94 forms a Glycyl lysine isopeptide (Lys-Gly) (interchain with G-Cter in SUMO1) linkage. Residues 127-143 are heparin-binding; it reads KRTGQYKLGSKTGPGQK.

Belongs to the heparin-binding growth factors family. As to quaternary structure, monomer. Homodimer. Interacts with FGFR1, FGFR2, FGFR3 and FGFR4. Affinity between fibroblast growth factors (FGFs) and their receptors is increased by heparan sulfate glycosaminoglycans that function as coreceptors. Interacts with CSPG4, FGFBP1 and TEC. Found in a complex with FGFBP1, FGF1 and FGF2. Interacts with FGFBP3. Interacts with integrin ITGAV:ITGB3; the interaction is required for FGF2 signaling. Interacts with SNORC (via the extracellular domain). Interacts with glypican GPC3. Phosphorylation at Tyr-81 regulates FGF2 unconventional secretion.

It is found in the secreted. The protein localises to the nucleus. Functionally, acts as a ligand for FGFR1, FGFR2, FGFR3 and FGFR4. Also acts as an integrin ligand which is required for FGF2 signaling. Binds to integrin ITGAV:ITGB3. Plays an important role in the regulation of cell survival, cell division, cell differentiation and cell migration. Functions as a potent mitogen in vitro. Can induce angiogenesis. Mediates phosphorylation of ERK1/2 and thereby promotes retinal lens fiber differentiation. The sequence is that of Fibroblast growth factor 2 (Fgf2) from Mus musculus (Mouse).